The following is a 170-amino-acid chain: Transcriptional repressor NrdR (170 aa).

A zinc finger lies at 3 to 34 (CPFCRHPDSRVVDSRTTDDGTSIRRRRQCPDC). The 91-residue stretch at 46–136 (LMVVKRSGVT…VYRAFDSLED (91 aa)) folds into the ATP-cone domain. The segment at 148–170 (RPSAEDRGSGETLEVPAPAIAAD) is disordered.

Belongs to the NrdR family. Zn(2+) serves as cofactor.

Negatively regulates transcription of bacterial ribonucleotide reductase nrd genes and operons by binding to NrdR-boxes. This chain is Transcriptional repressor NrdR, found in Streptomyces griseus subsp. griseus (strain JCM 4626 / CBS 651.72 / NBRC 13350 / KCC S-0626 / ISP 5235).